Reading from the N-terminus, the 263-residue chain is Pro-opiomelanocortin (263 aa).

The first 25 residues, 1-25 (MLHPVWGCVVAVMGVLWFYSSGVQS), serve as a signal peptide directing secretion. Gln-26 is modified (pyrrolidone carboxylic acid). 2 cysteine pairs are disulfide-bonded: Cys-27–Cys-49 and Cys-33–Cys-45. Positions 114 to 142 (SQPRDEVERESEEEEGLQQHRRDDKRSYS) are disordered. Basic and acidic residues predominate over residues 130–142 (LQQHRRDDKRSYS). At Val-152 the chain carries Valine amide.

It belongs to the POMC family. Specific enzymatic cleavages at paired basic residues yield the different active peptides.

It is found in the secreted. In terms of biological role, stimulates the adrenal glands to release cortisol. Anorexigenic peptide. Increases the pigmentation of skin by increasing melanin production in melanocytes. Functionally, increases the pigmentation of skin by increasing melanin production in melanocytes. Its function is as follows. Endogenous orexigenic opiate. In terms of biological role, endogenous opiate. This is Pro-opiomelanocortin (pomc) from Acipenser transmontanus (White sturgeon).